A 477-amino-acid polypeptide reads, in one-letter code: Aryl-phospho-beta-D-glucosidase BglC (477 aa).

The Proton donor role is filled by E170. E378 serves as the catalytic Nucleophile.

The protein belongs to the glycosyl hydrolase 1 family.

The catalysed reaction is 6-phospho-beta-D-glucosyl-(1-&gt;4)-D-glucose + H2O = D-glucose 6-phosphate + D-glucose. Its function is as follows. Is able to catalyze the hydrolysis of aryl-phospho-beta-D-glucosides such as 4-methylumbelliferyl-phospho-beta-D-glucopyranoside (MUG-P), phosphoarbutin and phosphosalicin. Is not essential for growth on arbutin and salicin as the sole carbon source. The chain is Aryl-phospho-beta-D-glucosidase BglC (bglC) from Bacillus subtilis (strain 168).